The chain runs to 663 residues: Alcohol oxidase (663 aa).

8–39 (DVIVCGGGSTGCVIAGRLANVDENLKVLLIEN) is an FAD binding site. The Proton acceptor role is filled by His-567. Positions 661 to 663 (ARY) match the Microbody targeting signal motif.

It belongs to the GMC oxidoreductase family. In terms of assembly, homooctamer. Requires FAD as cofactor.

The protein resides in the peroxisome matrix. The enzyme catalyses a primary alcohol + O2 = an aldehyde + H2O2. It participates in energy metabolism; methane degradation. Functionally, catalyzes the oxidation of methanol to formaldehyde and hydrogen peroxide, the first step in the methanol utilization pathway of methylotrophic yeasts. This Candida boidinii (Yeast) protein is Alcohol oxidase (AOD1).